A 436-amino-acid chain; its full sequence is Gamma-glutamyl phosphate reductase (436 aa).

It belongs to the gamma-glutamyl phosphate reductase family.

The protein resides in the cytoplasm. The catalysed reaction is L-glutamate 5-semialdehyde + phosphate + NADP(+) = L-glutamyl 5-phosphate + NADPH + H(+). It functions in the pathway amino-acid biosynthesis; L-proline biosynthesis; L-glutamate 5-semialdehyde from L-glutamate: step 2/2. In terms of biological role, catalyzes the NADPH-dependent reduction of L-glutamate 5-phosphate into L-glutamate 5-semialdehyde and phosphate. The product spontaneously undergoes cyclization to form 1-pyrroline-5-carboxylate. This is Gamma-glutamyl phosphate reductase from Prochlorococcus marinus (strain MIT 9312).